Consider the following 384-residue polypeptide: Cell adhesion molecule CEACAM18 (384 aa).

A signal peptide spans Met-1–Gly-30. Residues Asn-108, Asn-112, Asn-121, Asn-162, and Asn-270 are each glycosylated (N-linked (GlcNAc...) asparagine). Residues Pro-227 to Gln-314 enclose the Ig-like C2-type domain. A disulfide bridge links Cys-255 with Cys-296. The disordered stretch occupies residues Gln-358–Arg-384. The span at Pro-359 to Met-369 shows a compositional bias: polar residues. Basic and acidic residues predominate over residues Pro-373–Arg-384.

The protein belongs to the immunoglobulin superfamily. CEA family.

This is Cell adhesion molecule CEACAM18 from Homo sapiens (Human).